The following is a 78-amino-acid chain: Hainantoxin-XX.3 (78 aa).

The N-terminal stretch at 1–23 (MKSATLLALSFLLIASCFLICEA) is a signal peptide. A propeptide spanning residues 24–47 (EHSRYEEHEILEENMGDVVNLEQR) is cleaved from the precursor. Disulfide bonds link cysteine 49-cysteine 62, cysteine 56-cysteine 66, and cysteine 61-cysteine 77.

Belongs to the hainantoxin family. 20 subfamily. As to expression, expressed by the venom gland.

Its subcellular location is the secreted. Functionally, putative ion channel inhibitor. The chain is Hainantoxin-XX.3 from Cyriopagopus hainanus (Chinese bird spider).